A 91-amino-acid polypeptide reads, in one-letter code: Early E3B 10.4 kDa protein (91 aa).

The N-terminal stretch at 1-22 (MIPRNFFFTILICPFNVCATFT) is a signal peptide. The Lumenal segment spans residues 23-34 (AVATASPDCIGP). A helical membrane pass occupies residues 35–60 (FASYALFAFVTCICVCSIVCLVINFF). Over 61-91 (QLVDWIFVRIAYLRHHPEYRNQNVAALLRLI) the chain is Cytoplasmic.

It belongs to the adenoviridae E3B family.

Its subcellular location is the host endoplasmic reticulum membrane. Functionally, down-regulates the EGF receptor. This chain is Early E3B 10.4 kDa protein, found in Human adenovirus B serotype 3 (HAdV-3).